Consider the following 173-residue polypeptide: Photosystem I assembly protein Ycf3 (173 aa).

TPR repeat units follow at residues 35–68, 72–105, and 120–153; these read AFAY…EDDP, SYIL…NPRM, and GEKA…APNN.

It belongs to the Ycf3 family.

Its subcellular location is the cellular thylakoid membrane. In terms of biological role, essential for the assembly of the photosystem I (PSI) complex. May act as a chaperone-like factor to guide the assembly of the PSI subunits. In Picosynechococcus sp. (strain ATCC 27264 / PCC 7002 / PR-6) (Agmenellum quadruplicatum), this protein is Photosystem I assembly protein Ycf3.